The primary structure comprises 290 residues: N-acetylmannosamine kinase (290 aa).

Residues 6–13 (ALDIGGTK) and 132–139 (GVGGGIIL) each bind ATP. The Zn(2+) site is built by His-156, Cys-166, Cys-168, and Cys-173.

It belongs to the ROK (NagC/XylR) family. NanK subfamily. As to quaternary structure, homodimer.

The enzyme catalyses an N-acyl-D-mannosamine + ATP = an N-acyl-D-mannosamine 6-phosphate + ADP + H(+). It functions in the pathway amino-sugar metabolism; N-acetylneuraminate degradation; D-fructose 6-phosphate from N-acetylneuraminate: step 2/5. Its function is as follows. Catalyzes the phosphorylation of N-acetylmannosamine (ManNAc) to ManNAc-6-P. This is N-acetylmannosamine kinase from Yersinia pseudotuberculosis serotype O:3 (strain YPIII).